A 401-amino-acid polypeptide reads, in one-letter code: Secreted LysM effector Blys8 (401 aa).

Residues 1–19 form the signal peptide; the sequence is MRTLAIFFIGAAVAAHVSP. Residues 42-89 form the LysM 1 domain; it reads TYYDEAYDKSYTCDDLLSAWVISKQDFESWNPAVGSDCKLVLGHSYCV. Over residues 98 to 136 the composition is skewed to low complexity; sequence STTTTTTTSTTTKTTTKTTTTTTAAPKPTSSAPSGPSPT. A disordered region spans residues 98–137; that stretch reads STTTTTTTSTTTKTTTKTTTTTTAAPKPTSSAPSGPSPTQ. The LysM 2 domain maps to 146-193; the sequence is AYYFVKAGDTCDKISQMYGTFSTAQFIEWNPAVGSSCTGLWAGYYYCV. The disordered stretch occupies residues 201–223; that stretch reads SRTSTAGPTSTKPANGVTTPQPT. Positions 233-279 constitute a LysM 3 domain; the sequence is QFVYVQPGDQCGTVASRAGVSLSDFLQWNPSTGKDCSGLWANAYACV.

The protein belongs to the secreted LysM effector family.

Might have a role in sequestration of chitin oligosaccharides (breakdown products of fungal cell walls that are released during invasion and act as triggers of host immunity) to dampen host defense. The protein is Secreted LysM effector Blys8 of Beauveria bassiana (strain ARSEF 2860) (White muscardine disease fungus).